Consider the following 305-residue polypeptide: Oxidoreductase swnR (305 aa).

The protein belongs to the NmrA-type oxidoreductase family. Isoflavone reductase subfamily.

It carries out the reaction L-pipecolate + O2 = L-1-piperideine-6-carboxylate + H2O2 + H(+). It participates in mycotoxin biosynthesis. Its function is as follows. Oxidoreductase; part of the gene cluster that mediates the biosynthesis of swainsonine (SW), a cytotoxic fungal alkaloid and a potential cancer therapy drug. Swainsonine production occurs via a multibranched pathway and is dispensable for fungal colonization of plants and infection of insect hosts. The first step of swainsonine biosynthesis is the production of the precursor pipecolic acid (PA) via conversion of L-lysine (Lys) to 1-piperideine-6-carboxylate (P6C) by the aminotransferase swnA, the latter being further reduced to PA by the reductase swnR. PA can be converted from lysine by both the SW biosynthetic cluster and the unclustered genes such as lysine cyclodeaminase. The PKS-NRPS hybrid synthetase swnK uptakes and condensates PA and malonyl-CoA with and without skipping of the ketoreductase (KR) domain in order to produce 3 intermediates, 1-oxoindolizidine, (1S)-1-hydroxyindolizin, and (1R)-1-hydroxyindolizine; with the transisomer (1S)-1-hydroxyindolizin being predominant. The terminal thioester reductase (TE) domain of swnK is involved in reduction of the thioester bond to release the intermediate aldehydes. The oxidoreductase swnN could contribute to the reduction of 1-oxoindolizidine to (1S)-1-hydroxyindolizin and (1R)-1-hydroxyindolizine, contributing to the major route of SW production. The dioxygenase swnH2 would be responsible for the oxidization of (1R)-1-hydroxyindolizine into (1R,2S)-1,2-dihydroxyindolizine and of (1S)-1-hydroxyindolizin to yield both (1R,2S)-1,2-dihydroxyindolizine and (1S,2S)-1,2-dihydroxyindolizine. The dioxygenase swnH1 then performs the conversion of the 1,2-dihydroxyindolizine epimers to SW. In Metarhizium robertsii (strain ARSEF 23 / ATCC MYA-3075) (Metarhizium anisopliae (strain ARSEF 23)), this protein is Oxidoreductase swnR.